Consider the following 146-residue polypeptide: Aspartate 1-decarboxylase (146 aa).

Ser25 serves as the catalytic Schiff-base intermediate with substrate; via pyruvic acid. Ser25 is modified (pyruvic acid (Ser)). Thr57 serves as a coordination point for substrate. The active-site Proton donor is Tyr58. Residue 73-75 (GPA) participates in substrate binding.

The protein belongs to the PanD family. In terms of assembly, heterooctamer of four alpha and four beta subunits. Requires pyruvate as cofactor. Is synthesized initially as an inactive proenzyme, which is activated by self-cleavage at a specific serine bond to produce a beta-subunit with a hydroxyl group at its C-terminus and an alpha-subunit with a pyruvoyl group at its N-terminus.

It localises to the cytoplasm. The enzyme catalyses L-aspartate + H(+) = beta-alanine + CO2. It functions in the pathway cofactor biosynthesis; (R)-pantothenate biosynthesis; beta-alanine from L-aspartate: step 1/1. In terms of biological role, catalyzes the pyruvoyl-dependent decarboxylation of aspartate to produce beta-alanine. The sequence is that of Aspartate 1-decarboxylase from Salinibacter ruber (strain DSM 13855 / M31).